We begin with the raw amino-acid sequence, 281 residues long: Homeobox protein Hox-A5 (281 aa).

2 disordered regions span residues 65–144 (VGNE…PCSS) and 162–183 (PLEE…SDST). Composition is skewed to polar residues over residues 68–99 (ERTQ…STGT) and 114–127 (VASS…QSQH). A compositionally biased stretch (low complexity) spans 132–144 (NSITTPCSTPCSS). A compositionally biased stretch (polar residues) spans 172–183 (APTTPQNVSDST). Positions 187 to 192 (IYPWMR) match the Antp-type hexapeptide motif. The segment at residues 205–264 (GKRARTAYTRYQTLELEKEFHFNRYLTRRRRIEIAHALCLSERQIKIWFQNRRMKWKKDN) is a DNA-binding region (homeobox).

The protein belongs to the Antp homeobox family.

It is found in the nucleus. Its function is as follows. Sequence-specific transcription factor which is part of a developmental regulatory system that provides cells with specific positional identities on the anterior-posterior axis. This is Homeobox protein Hox-A5 (hoxa5) from Morone saxatilis (Striped bass).